We begin with the raw amino-acid sequence, 282 residues long: 4-diphosphocytidyl-2-C-methyl-D-erythritol kinase (282 aa).

Lysine 8 is a catalytic residue. 91 to 101 (PVAAGLAGGST) contributes to the ATP binding site. Aspartate 133 is a catalytic residue.

This sequence belongs to the GHMP kinase family. IspE subfamily.

It carries out the reaction 4-CDP-2-C-methyl-D-erythritol + ATP = 4-CDP-2-C-methyl-D-erythritol 2-phosphate + ADP + H(+). Its pathway is isoprenoid biosynthesis; isopentenyl diphosphate biosynthesis via DXP pathway; isopentenyl diphosphate from 1-deoxy-D-xylulose 5-phosphate: step 3/6. Functionally, catalyzes the phosphorylation of the position 2 hydroxy group of 4-diphosphocytidyl-2C-methyl-D-erythritol. The chain is 4-diphosphocytidyl-2-C-methyl-D-erythritol kinase from Symbiobacterium thermophilum (strain DSM 24528 / JCM 14929 / IAM 14863 / T).